A 247-amino-acid chain; its full sequence is Protein NipSnap homolog 3A (247 aa).

Residues lysine 48 and lysine 166 each carry the N6-acetyllysine modification.

The protein belongs to the NipSnap family. As to quaternary structure, interacts with the Salmonella typhimurium virulence protein spiC. As to expression, ubiquitous. Highly expressed in liver, kidney and muscle. Expressed at intermediate level in brain, heart, colon, thymus, kidney, small intestine, placenta, lung, leukocytes and spleen.

The protein resides in the cytoplasm. The protein localises to the cytosol. The sequence is that of Protein NipSnap homolog 3A (NIPSNAP3A) from Homo sapiens (Human).